Here is a 312-residue protein sequence, read N- to C-terminus: Glyoxylate/hydroxypyruvate reductase A (312 aa).

R227 is an active-site residue. H275 functions as the Proton donor in the catalytic mechanism.

Belongs to the D-isomer specific 2-hydroxyacid dehydrogenase family. GhrA subfamily.

It localises to the cytoplasm. It catalyses the reaction glycolate + NADP(+) = glyoxylate + NADPH + H(+). It carries out the reaction (R)-glycerate + NAD(+) = 3-hydroxypyruvate + NADH + H(+). The catalysed reaction is (R)-glycerate + NADP(+) = 3-hydroxypyruvate + NADPH + H(+). Functionally, catalyzes the NADPH-dependent reduction of glyoxylate and hydroxypyruvate into glycolate and glycerate, respectively. The polypeptide is Glyoxylate/hydroxypyruvate reductase A (Shigella boydii serotype 18 (strain CDC 3083-94 / BS512)).